The chain runs to 235 residues: MKNLVKLSLIAMLTAATLPAMAAKSEPYTHQGTNAREMLVEQPIHWISVDQLKKELEGKAPMNISFDIDETVLFSSPCFYHGQQKYSPGKQDYLKNQDFWNEVNAGCDQYSIPKQIAVDLINMHQERGDQIYFITGRTAEDKDGVTPVLQKAFNIKNMHPVEFMGGRDRTTKYNKTPGIIEHKVTIHYGDSDDDILAAKEAGVRGIRLMRAANSTYQPMPTLGGYGEEVLINSSY.

The first 22 residues, 1-22 (MKNLVKLSLIAMLTAATLPAMA), serve as a signal peptide directing secretion. Aspartate 67 functions as the Nucleophile in the catalytic mechanism. Mg(2+) contacts are provided by aspartate 67 and aspartate 69. The active-site Proton donor is aspartate 69. Substrate is bound by residues 135 to 136 (TG) and lysine 175. Residue aspartate 190 coordinates Mg(2+).

It belongs to the class B bacterial acid phosphatase family. In terms of assembly, homotetramer. Mg(2+) serves as cofactor.

It localises to the periplasm. It carries out the reaction a phosphate monoester + H2O = an alcohol + phosphate. Dephosphorylates several organic phosphate monoesters. Also has a phosphotransferase activity catalyzing the transfer of low-energy phosphate groups from organic phosphate monoesters to free hydroxyl groups of various organic compounds. The chain is Class B acid phosphatase from Aggregatibacter actinomycetemcomitans serotype C (strain D11S-1) (Actinobacillus actinomycetemcomitans).